We begin with the raw amino-acid sequence, 116 residues long: MESPRLRLLPLLGAALLLLLPLLGALAQEDAELQPRALDIYSAVEDASHEKELIEALQEVLKKLKSKRIPIYEKKYGQVPMCDAGEQCAVRKGARIGKLCDCPRGTSCNSFLLKCL.

An N-terminal signal peptide occupies residues 1-27; the sequence is MESPRLRLLPLLGAALLLLLPLLGALA. Tyr-41 carries the post-translational modification Phosphotyrosine. The residue at position 48 (Ser-48) is a Phosphoserine. 3 disulfide bridges follow: Cys-82–Cys-100, Cys-88–Cys-108, and Cys-102–Cys-115.

This sequence belongs to the CART family.

The protein localises to the secreted. Its function is as follows. Satiety factor closely associated with the actions of leptin and neuropeptide y; this anorectic peptide inhibits both normal and starvation-induced feeding and completely blocks the feeding response induced by neuropeptide Y and regulated by leptin in the hypothalamus. The chain is Cocaine- and amphetamine-regulated transcript protein (CARTPT) from Bos taurus (Bovine).